Consider the following 185-residue polypeptide: Ribosome-recycling factor (185 aa).

Belongs to the RRF family.

It localises to the cytoplasm. In terms of biological role, responsible for the release of ribosomes from messenger RNA at the termination of protein biosynthesis. May increase the efficiency of translation by recycling ribosomes from one round of translation to another. This Thioalkalivibrio sulfidiphilus (strain HL-EbGR7) protein is Ribosome-recycling factor.